Here is a 448-residue protein sequence, read N- to C-terminus: Cysteine--tRNA ligase (448 aa).

Cys27 contributes to the Zn(2+) binding site. The 'HIGH' region motif lies at 29 to 39; the sequence is PTVYNYIHVGN. Residues Cys210, His235, and Glu239 each coordinate Zn(2+). Residues 267–271 carry the 'KMSKS' region motif; it reads KMSKS. Residue Lys270 participates in ATP binding.

It belongs to the class-I aminoacyl-tRNA synthetase family. Monomer. It depends on Zn(2+) as a cofactor.

The protein resides in the cytoplasm. It carries out the reaction tRNA(Cys) + L-cysteine + ATP = L-cysteinyl-tRNA(Cys) + AMP + diphosphate. This is Cysteine--tRNA ligase from Lactococcus lactis subsp. cremoris (strain SK11).